A 1017-amino-acid polypeptide reads, in one-letter code: Pro-apoptotic serine protease NMA111 (1017 aa).

The tract at residues 1-46 (MDQNGASTEARSKRKQPPTSPSTDRPLKQIKPEVDAHTRNGVPKSP) is disordered. Basic and acidic residues predominate over residues 25–38 (RPLKQIKPEVDAHT). Positions 88 to 278 (VVSIHFCQTC…LPLDRPLRAL (191 aa)) are serine protease. Catalysis depends on charge relay system residues His-126, Asp-157, and Ser-239. PDZ domains follow at residues 305–383 (RRLG…QRAG) and 879–960 (SFCG…MTFD).

Belongs to the peptidase S1C family.

The protein resides in the nucleus. Nuclear serine protease which mediates apoptosis. The chain is Pro-apoptotic serine protease NMA111 (NMA111) from Phaeosphaeria nodorum (strain SN15 / ATCC MYA-4574 / FGSC 10173) (Glume blotch fungus).